Consider the following 122-residue polypeptide: uncharacterized protein (122 aa).

An N-terminal signal peptide occupies residues 1 to 17 (MKYSSIFSMLSFFILFA).

This is an uncharacterized protein from Escherichia coli (strain K12).